A 221-amino-acid chain; its full sequence is Ras-related protein Rab-27A (221 aa).

The residue at position 2 (Ser-2) is an N-acetylserine. Ser-2 bears the Phosphoserine mark. 16 to 24 (GDSGVGKTS) is a GTP binding site. The Effector region motif lies at 38–46 (FITTVGIDF). GTP is bound by residues 74–78 (DTAGQ), 133–136 (NKSD), and 163–165 (SAA). The cysteines at positions 123 and 188 are disulfide-linked. S-geranylgeranyl cysteine attachment occurs at residues Cys-219 and Cys-221. Cys-221 is subject to Cysteine methyl ester.

It belongs to the small GTPase superfamily. Rab family. As to quaternary structure, binds SYTL1, SLAC2B, MYRIP, SYTL3, SYTL4 and SYTL5. Interacts with RPH3A and RPH3A. Binds MLPH and SYTL2. Interacts with UNC13D. Does not interact with the BLOC-3 complex (heterodimer of HPS1 and HPS4). Interacts (GDP-bound form preferentially) with DENND10. High levels in eye, intestine, lung, pancreas and spleen, and low or absent in brain, liver, heart, kidney, and skeletal muscle.

The protein localises to the membrane. Its subcellular location is the melanosome. It localises to the late endosome. The protein resides in the lysosome. The enzyme catalyses GTP + H2O = GDP + phosphate + H(+). Regulated by guanine nucleotide exchange factors (GEFs) which promote the exchange of bound GDP for free GTP, GTPase activating proteins (GAPs) which increase the GTP hydrolysis activity, and GDP dissociation inhibitors which inhibit the dissociation of the nucleotide from the GTPase. Activated by GEFs such as DENND10. Its function is as follows. Small GTPase which cycles between active GTP-bound and inactive GDP-bound states. In its active state, binds to a variety of effector proteins to regulate homeostasis of late endocytic pathway, including endosomal positioning, maturation and secretion. Plays a role in cytotoxic granule exocytosis in lymphocytes. Required for both granule maturation and granule docking and priming at the immunologic synapse. The polypeptide is Ras-related protein Rab-27A (Rab27a) (Rattus norvegicus (Rat)).